The chain runs to 547 residues: MTKTDPAPMAPPPRGEEEEEEEEDEPVPEAPSPTQERRQKPVVHPSAPAPLPKDYAFTFFDPNDPACQEILFDPQTTIPELFAIVRQWVPQVQHKIDVIGNEILRRGCHVNDRDGLTDMTLLHYACKAGAHGVGDPAAAVRLSQQLLALGADVTLRSRWTNMNALHYAAYFDVPDLVRVLLKGARPRVVNSTCSDFNHGSALHIAASSLCLGAAKCLLEHGANPALRNRKGQVPAEVVPDPMDMSLDKAEAALVAKELRTLLEEAVPLSCALPKVTLPNYDNVPGNLMLSALGLRLGDRVLLDGQKTGTLRFCGTTEFASGQWVGVELDEPEGKNDGSVGGVRYFICPPKQGLFASVSKISKAVDAPPSSVTSTPRTPRMDFSRVTGKGRREHKGKKKTPSSPSLGSLQQRDGAKAEVGDQVLVAGQKQGIVRFYGKTDFAPGYWYGIELDQPTGKHDGSVFGVRYFTCPPRHGVFAPASRIQRIGGSTDSPGDSVGAKKVHQVTMTQPKRTFTTVRTPKDIASENSISRLLFCCWFPWMLRAEMQS.

Positions 1–49 are disordered; sequence MTKTDPAPMAPPPRGEEEEEEEEDEPVPEAPSPTQERRQKPVVHPSAPA. Positions 16–27 are enriched in acidic residues; that stretch reads EEEEEEEEDEPV. ANK repeat units follow at residues 117 to 158, 160 to 191, and 197 to 229; these read TDMT…LRSR, TNMN…VVNS, and NHGS…LRNR. The CAP-Gly 1 domain maps to 314 to 356; it reads GTTEFASGQWVGVELDEPEGKNDGSVGGVRYFICPPKQGLFAS. Residues 365–413 form a disordered region; that stretch reads DAPPSSVTSTPRTPRMDFSRVTGKGRREHKGKKKTPSSPSLGSLQQRDG. The span at 367–377 shows a compositional bias: low complexity; that stretch reads PPSSVTSTPRT. Threonine 374 is modified (phosphothreonine). Over residues 387–399 the composition is skewed to basic residues; the sequence is GKGRREHKGKKKT. The span at 400–410 shows a compositional bias: polar residues; sequence PSSPSLGSLQQ. The residue at position 401 (serine 401) is a Phosphoserine. Residues 436–478 enclose the CAP-Gly 2 domain; it reads GKTDFAPGYWYGIELDQPTGKHDGSVFGVRYFTCPPRHGVFAP. The interval 488–547 is goLD; the sequence is STDSPGDSVGAKKVHQVTMTQPKRTFTTVRTPKDIASENSISRLLFCCWFPWMLRAEMQS. Residues cysteine 534 and cysteine 535 are each lipidated (S-palmitoyl cysteine).

In terms of assembly, homodimer. Interacts with AKT1 and AKT2; when AKT1 and AKT2 are phosphorylated and activated, affinity is higher for AKT2. Interacts with ZDHHC13 (via ANK repeats). Interacts with ZDHHC17 (via ANK repeats). Palmitoylation by ZDHHC17 regulates association with the plasma membrane.

It is found in the cell membrane. It localises to the cytoplasm. Its subcellular location is the golgi apparatus. The protein localises to the golgi stack. Its function is as follows. Functions as a cytoplasmic linker protein. Involved in TGN-endosome dynamics. May modulate the cellular compartmentalization of AKT kinase family and promote its cell membrane localization, thereby playing a role in glucose transport in adipocytes. This chain is CAP-Gly domain-containing linker protein 3 (CLIP3), found in Homo sapiens (Human).